The chain runs to 2073 residues: Dedicator of cytokinesis protein 11 (2073 aa).

Ser12 is subject to Phosphoserine. Residue Thr16 is modified to Phosphothreonine. Residues Ser23 and Ser161 each carry the phosphoserine modification. The PH domain maps to 165-272 (GVIKQGWLHK…WLITLKKIIQ (108 aa)). The residue at position 248 (Tyr248) is a Phosphotyrosine. Ser306, Ser440, and Ser445 each carry phosphoserine. The 179-residue stretch at 640–818 (KNHLYVYPLQ…PLLKIKSHLE (179 aa)) folds into the C2 DOCK-type domain. Residues 1226–1267 (FQNGHGIKREDSRGSLIPEGATGFPDQGNTGENTRQSSTRSS) are disordered. Residues Ser1237 and Ser1240 each carry the phosphoserine modification. One can recognise a DOCKER domain in the interval 1609 to 2036 (KSYASTPELR…LSDIIHEQIL (428 aa)).

This sequence belongs to the DOCK family. As to quaternary structure, interacts with CDC42.

Functionally, guanine nucleotide-exchange factor (GEF) that activates CDC42 by exchanging bound GDP for free GTP. Required for marginal zone (MZ) B-cell development, is associated with early bone marrow B-cell development, MZ B-cell formation, MZ B-cell number and marginal metallophilic macrophages morphology. Facilitates filopodia formation through the activation of CDC42. This Homo sapiens (Human) protein is Dedicator of cytokinesis protein 11.